A 113-amino-acid polypeptide reads, in one-letter code: U10-theraphotoxin-Hs2a (113 aa).

Positions 1–21 (MNTVRVTFLLVFVLAVSLGQA) are cleaved as a signal peptide. A propeptide spanning residues 22–67 (DEDGNRMEKRQKKTEAENLLLPKLEELDAKLWEEDSVESRNSRQKR) is cleaved from the precursor. 3 cysteine pairs are disulfide-bonded: Cys-68–Cys-86, Cys-75–Cys-91, and Cys-85–Cys-106.

Belongs to the neurotoxin 14 (magi-1) family. 02 (HWTX-XVIc) subfamily. Expressed by the venom gland.

It is found in the secreted. Functionally, probable ion channel inhibitor. This chain is U10-theraphotoxin-Hs2a, found in Cyriopagopus schmidti (Chinese bird spider).